Consider the following 865-residue polypeptide: Leucine-rich repeat-containing protein 66 (865 aa).

Residues 4-24 (FYARVTVMVTGLCFVGTVTNP) form a helical membrane-spanning segment. Asn-42 is a glycosylation site (N-linked (GlcNAc...) asparagine). 5 LRR repeats span residues 138–160 (RLKVLLLQRNQLGPTPKGLWKLK), 161–182 (PLCSLDLSFNRRVGIGLSGFHG), 185–206 (QLKSIYLKNNKILTIHPEAFKG), 209–230 (KLQVVDLRSSALTMLVPIVTIA), and 235–255 (NLELGLADNQWQCNESDANFQ). The N-linked (GlcNAc...) asparagine glycan is linked to Asn-248. The helical transmembrane segment at 366 to 386 (ALAVCLSVFITFVVAFCLGAF) threads the bilayer. 2 disordered regions span residues 463-522 (RMLG…PGQH) and 654-749 (DTPS…AESV). Residues 470–479 (MDPSSQQSPG) show a composition bias toward polar residues. Residues 675–688 (AVQRDASFDPHDDL) are compositionally biased toward basic and acidic residues. The segment covering 702-713 (FTLSSEGSQDTR) has biased composition (polar residues). Ser-714 and Ser-748 each carry phosphoserine. The 32-residue stretch at 728–759 (SQPLPSRNLGEYKDSVTSAESVEDITSQQTLE) folds into the LRRNT domain. Residue Asn-787 is glycosylated (N-linked (GlcNAc...) asparagine). Residues 840 to 865 (FPNIDSSPSPPCSDQDPSDPEEHDTK) form a disordered region. Positions 855–865 (DPSDPEEHDTK) are enriched in acidic residues.

It localises to the membrane. This Rattus norvegicus (Rat) protein is Leucine-rich repeat-containing protein 66 (Lrrc66).